Consider the following 344-residue polypeptide: L-rhamnose-proton symporter (344 aa).

The next 10 helical transmembrane spans lie at 4 to 24 (AITMGIFWHLIGAASAACFYA), 38 to 58 (WSVGGIVSWIILPWAISALLL), 68 to 88 (FSLSTLLPVFLFGAMCGIGNI), 101 to 121 (MGIGIAIGITLIVGTLMTPII), 137 to 157 (TLLGVLVALIGVGIVTRAGQL), 175 to 195 (LVLAVMCGIFSAGMSFAMNAA), 214 to 234 (LPSYVVIMGGGAIINLGFCFI), 259 to 279 (VLLSTLGGLMWYLQFFFYAWG), 290 to 310 (ISWMLHMSFYVLCGGIVGLVL), and 323 to 343 (VLSLGCVVIIVAANIVGIGMA).

Belongs to the L-rhamnose transporter (TC 2.A.7.6) family.

The protein resides in the cell inner membrane. It catalyses the reaction L-rhamnopyranose(in) + H(+)(in) = L-rhamnopyranose(out) + H(+)(out). Uptake of L-rhamnose across the cytoplasmic membrane with the concomitant transport of protons into the cell (symport system). This chain is L-rhamnose-proton symporter, found in Escherichia coli O9:H4 (strain HS).